Reading from the N-terminus, the 296-residue chain is tRNA dimethylallyltransferase (296 aa).

11–18 (GPTAVGKT) serves as a coordination point for ATP. Residue 13 to 18 (TAVGKT) participates in substrate binding. The segment at 36–39 (DSQQ) is interaction with substrate tRNA.

This sequence belongs to the IPP transferase family. In terms of assembly, monomer. Requires Mg(2+) as cofactor.

It carries out the reaction adenosine(37) in tRNA + dimethylallyl diphosphate = N(6)-dimethylallyladenosine(37) in tRNA + diphosphate. In terms of biological role, catalyzes the transfer of a dimethylallyl group onto the adenine at position 37 in tRNAs that read codons beginning with uridine, leading to the formation of N6-(dimethylallyl)adenosine (i(6)A). This is tRNA dimethylallyltransferase from Streptococcus equi subsp. equi (strain 4047).